A 165-amino-acid chain; its full sequence is MKVAVTGRPGVGKTTLCLKVHESLKDKMTVGGFITKEVRRDGVRVGFKLVDLSSGNEEWLARVGEGKARVGKYAVNVEGLEEFLDSVRTDADLVIIDEVGPMELKSRKFVRFVENLMGRERLLFTIHLKSRHRLLDRIRREFKVYVIDESNRNRIAEEITRILEG.

ATP contacts are provided by residues 7-14 (GRPGVGKT) and 93-100 (LVIIDEVG).

This sequence belongs to the THEP1 NTPase family.

It catalyses the reaction a ribonucleoside 5'-triphosphate + H2O = a ribonucleoside 5'-diphosphate + phosphate + H(+). Functionally, has nucleotide phosphatase activity towards ATP, GTP, CTP, TTP and UTP. May hydrolyze nucleoside diphosphates with lower efficiency. This chain is Nucleoside-triphosphatase THEP1, found in Archaeoglobus fulgidus (strain ATCC 49558 / DSM 4304 / JCM 9628 / NBRC 100126 / VC-16).